The primary structure comprises 180 residues: ATP-dependent protease subunit HslV (180 aa).

T5 is an active-site residue. The Na(+) site is built by G161, C164, and T167.

This sequence belongs to the peptidase T1B family. HslV subfamily. In terms of assembly, a double ring-shaped homohexamer of HslV is capped on each side by a ring-shaped HslU homohexamer. The assembly of the HslU/HslV complex is dependent on binding of ATP.

The protein localises to the cytoplasm. The catalysed reaction is ATP-dependent cleavage of peptide bonds with broad specificity.. Allosterically activated by HslU binding. Functionally, protease subunit of a proteasome-like degradation complex believed to be a general protein degrading machinery. The protein is ATP-dependent protease subunit HslV of Campylobacter jejuni subsp. jejuni serotype O:6 (strain 81116 / NCTC 11828).